The following is a 205-amino-acid chain: Microtubule-associated protein Jupiter (205 aa).

Ser30 bears the Phosphoserine mark. Phosphothreonine is present on residues Thr41, Thr98, and Thr102. The span at 124 to 135 shows a compositional bias: polar residues; sequence LISNSKGNYNGK. Residues 124–205 form a disordered region; that stretch reads LISNSKGNYN…PPGGYSSGLW (82 aa). Over residues 136–149 the composition is skewed to low complexity; sequence SGSVSSASSSVSSS. Phosphoserine is present on residues Ser138 and Ser149. A compositionally biased stretch (polar residues) spans 181 to 191; it reads PANNGSSQVIN.

The protein belongs to the MAP Jupiter family.

The protein localises to the nucleus. The protein resides in the cytoplasm. Its subcellular location is the cytoskeleton. It is found in the spindle. In terms of biological role, binds to all microtubule populations. The chain is Microtubule-associated protein Jupiter from Drosophila virilis (Fruit fly).